Here is a 181-residue protein sequence, read N- to C-terminus: Organelle RRM domain-containing protein 6, chloroplastic (181 aa).

The N-terminal 44 residues, 1–44, are a transit peptide targeting the chloroplast; that stretch reads MAISLGRVVVPSCTISGDRLFIPNFSAICSVSCGRINVGTGVIS. Positions 77 to 155 constitute an RRM domain; that stretch reads TKLYVSGLSF…RVIFVEEAKT (79 aa). Basic and acidic residues predominate over residues 155 to 169; the sequence is TRSDMSRAKPRRDFP. The disordered stretch occupies residues 155–181; the sequence is TRSDMSRAKPRRDFPKPQSKPRTFRTW.

In terms of assembly, interacts with MORF8/RIP1, MORF2/RIP2, MORF9/RIP9 and VAR3/OZ1.

It is found in the plastid. The protein resides in the chloroplast. In terms of biological role, involved in C-to-U editing of chloroplastic RNA. Required for the photosynthetic subunit psbF transcript editing in chloroplast. The polypeptide is Organelle RRM domain-containing protein 6, chloroplastic (Arabidopsis thaliana (Mouse-ear cress)).